A 423-amino-acid polypeptide reads, in one-letter code: Acetylornithine aminotransferase, mitochondrial (423 aa).

The transit peptide at 1–13 directs the protein to the mitochondrion; that stretch reads MFKRYLSSTSSRR. Lys276 carries the post-translational modification N6-(pyridoxal phosphate)lysine.

The protein belongs to the class-III pyridoxal-phosphate-dependent aminotransferase family. Pyridoxal 5'-phosphate serves as cofactor.

It is found in the mitochondrion matrix. It carries out the reaction N(2)-acetyl-L-ornithine + 2-oxoglutarate = N-acetyl-L-glutamate 5-semialdehyde + L-glutamate. It functions in the pathway amino-acid biosynthesis; L-arginine biosynthesis; N(2)-acetyl-L-ornithine from L-glutamate: step 4/4. Its function is as follows. catalyzes the conversion of N-acetylglutamate-gamma-semialdehyde (NAGSA) to N-acetylornithine in arginine biosynthesis. The polypeptide is Acetylornithine aminotransferase, mitochondrial (ARG8) (Saccharomyces cerevisiae (strain ATCC 204508 / S288c) (Baker's yeast)).